A 47-amino-acid polypeptide reads, in one-letter code: uncharacterized protein (47 aa).

Residues 1–18 (MKKWLLIIAGALIISACA) form the signal peptide. Residues 28–47 (EGSHSGVKFDKDSRQWGLNQ) are disordered.

This is an uncharacterized protein from Haemophilus influenzae (strain ATCC 51907 / DSM 11121 / KW20 / Rd).